The following is a 109-amino-acid chain: Protein phosphatase 1 regulatory subunit 1C (109 aa).

The tract at residues 25-109 is disordered; that stretch reads AEQIRKRRPT…TNEREEQRDH (85 aa). The span at 45–54 shows a compositional bias: basic and acidic residues; that stretch reads NPPEIDDKRV. A compositionally biased stretch (polar residues) spans 55 to 75; the sequence is PNTQGELQNASPKQRKQSVYT. The segment covering 100–109 has biased composition (basic and acidic residues); the sequence is TNEREEQRDH.

It belongs to the protein phosphatase inhibitor 1 family.

It is found in the cytoplasm. May increase cell susceptibility to TNF-induced apoptosis. This Pongo abelii (Sumatran orangutan) protein is Protein phosphatase 1 regulatory subunit 1C (PPP1R1C).